A 90-amino-acid polypeptide reads, in one-letter code: MSGTSQKHRNFVAEPMGNKSVTELAGIGETLGGRLKDAGFDMAYTVLGQYLVLKKDEELFKDWMKEVCHASSKQASDCYNCLNDWCEEFL.

The protein belongs to the BAF family. May interact with MAD1.

The protein localises to the nucleus. It localises to the cytoplasm. The protein resides in the chromosome. In terms of biological role, plays fundamental roles in nuclear assembly, chromatin organization, gene expression and gonad development. May potently compress chromatin structure and be involved in membrane recruitment and chromatin decondensation during nuclear assembly. Functions are required in both M phase and interphase of the cell cycle. The protein is Barrier-to-autointegration factor (baf) of Drosophila melanogaster (Fruit fly).